The chain runs to 99 residues: Nucleoid-associated protein SPy_1862/M5005_Spy1580 (99 aa).

The protein belongs to the YbaB/EbfC family. Homodimer.

The protein localises to the cytoplasm. It is found in the nucleoid. Its function is as follows. Binds to DNA and alters its conformation. May be involved in regulation of gene expression, nucleoid organization and DNA protection. This is Nucleoid-associated protein SPy_1862/M5005_Spy1580 from Streptococcus pyogenes serotype M1.